The sequence spans 135 residues: Transcription antitermination protein NusB (135 aa).

This sequence belongs to the NusB family.

Functionally, involved in transcription antitermination. Required for transcription of ribosomal RNA (rRNA) genes. Binds specifically to the boxA antiterminator sequence of the ribosomal RNA (rrn) operons. This is Transcription antitermination protein NusB from Shewanella halifaxensis (strain HAW-EB4).